The sequence spans 156 residues: 6,7-dimethyl-8-ribityllumazine synthase (156 aa).

5-amino-6-(D-ribitylamino)uracil-binding positions include Phe22, 57-59 (AYE), and 81-83 (TVI). 86 to 87 (GT) contributes to the (2S)-2-hydroxy-3-oxobutyl phosphate binding site. His89 serves as the catalytic Proton donor. Phe114 lines the 5-amino-6-(D-ribitylamino)uracil pocket. Arg128 is a (2S)-2-hydroxy-3-oxobutyl phosphate binding site.

The protein belongs to the DMRL synthase family. Forms an icosahedral capsid composed of 60 subunits, arranged as a dodecamer of pentamers.

It catalyses the reaction (2S)-2-hydroxy-3-oxobutyl phosphate + 5-amino-6-(D-ribitylamino)uracil = 6,7-dimethyl-8-(1-D-ribityl)lumazine + phosphate + 2 H2O + H(+). The protein operates within cofactor biosynthesis; riboflavin biosynthesis; riboflavin from 2-hydroxy-3-oxobutyl phosphate and 5-amino-6-(D-ribitylamino)uracil: step 1/2. Catalyzes the formation of 6,7-dimethyl-8-ribityllumazine by condensation of 5-amino-6-(D-ribitylamino)uracil with 3,4-dihydroxy-2-butanone 4-phosphate. This is the penultimate step in the biosynthesis of riboflavin. The chain is 6,7-dimethyl-8-ribityllumazine synthase from Sodalis glossinidius (strain morsitans).